Here is a 505-residue protein sequence, read N- to C-terminus: Trans-cinnamate 4-monooxygenase (505 aa).

Residues 3–23 traverse the membrane as a helical segment; the sequence is LLLLEKTLLGSFVAVLVAILV. (E)-cinnamate is bound by residues 213 to 218 and Ala306; that span reads RSRLAQ. Cys447 lines the heme pocket.

Belongs to the cytochrome P450 family. The cofactor is heme.

The protein localises to the membrane. The catalysed reaction is (E)-cinnamate + reduced [NADPH--hemoprotein reductase] + O2 = (E)-4-coumarate + oxidized [NADPH--hemoprotein reductase] + H2O + H(+). Its pathway is phenylpropanoid metabolism; trans-4-coumarate biosynthesis; trans-4-coumarate from trans-cinnamate: step 1/1. Its function is as follows. Catalyzes the first oxidative step of the phenylpropanoid pathway in higher plants by transforming trans-cinnamate into p-coumarate. The compounds formed by this pathway are essential components for lignification, pollination, and defense against ultraviolet light, predators and pathogens. This chain is Trans-cinnamate 4-monooxygenase (CYP73A16), found in Populus kitakamiensis (Aspen).